A 1317-amino-acid chain; its full sequence is MAQTNGDMEHSKGWSGHFADFSTAQFRRPRSVCSSDETNGSFFLLQRLPKPNQSNSPPMVNRLKDSRKRRAAVVCRIRDTRDGWFSALVLSSLTSSVIGLFQISVKLPHEPYKIQVMVSSQEQVQDVRQSIVELPGTFQYTCFHLEFNGKRINDFVELSEVEGLKADSEIVLVEDPYTEKEARMHMVRIRDLVGAAGDRSDNLHGLNAGLSLHDAVTAEAAADDVKEHSLSKYDITASPSLETILPRVEAPLPKTVKSISLSAWNPPPYHLRQKGHLLYLQVTTNEGEQFQITSHVSGFYVNKCSNHKFDPLPRTTPKKVSAHSLLTLISKLSPSFNSAFEALQESNNKKDLLTTFPFQNAIPNSPWLVTPPSSNPNSHQADITRSQESYLVSGVDNAETLRDWNEEFQTTRELPRETVQDRVFRERLTSKLFADYNEAAARGAVLVARGEVAPLNPTEDRDAQIFVYNNIFYSFGADGVGTFVSEGGDEAARVAVGKDVLGIKAVNQLDINGLFTPGTVVVDYLGKRIVGQSIVPGIFKQREPGEHQIDYGGVEGKDVVATHPDFVSVFEKMSKALRIKKHPVWDKEGKRHELEGSVETKGLLGTDGRKYVLDLYRVTPLDVTWQEEPGSEDYPHRMSVLRLELVEAYWRSKMSQYVKAEVERRRAAKAQEEAANKEQSSEVTESKEQESEEKAEEALDQERVDISGFQLALNPDVCSGQVPQTEEEKKQWAEDEKEVRDACEFLRSKVIPELIQDLHDGDVGFPMDGQSLSQLLHKRGINIRYLGKLAQLSKEKGSRLEALTTLLVQEMIARAFKHIANRYLRNVPAPFVASCVAHLLNCLLGADVNPNPSAEIDASLREIYPEGDFSFEKVTPETLRAEVEKQVTVRYRYTLEAEWFASLRHLQVLRDIAIKLGLQLGARDYAFTKAQLPAKVPVANGVNGASHDEGKKKKKKGGDSKSPSRAVVEEKPVISIVPDDIVNVVPLVKDASPRSSLAEEALEAGRISLMQNQKQLGQELILESLSLHEQIYGILHPEVAKLYHQLSMLYYQTDEKEAAVELARKAVIVTERTLGVDSADTILAYLNLSLFEHASGNTKAALVYIKHAMDLWKIIYGSNHPDSITTMNNAAVMLQHLKQYSDSRKWFEASLAVCESLFGKQSINTATILFQLAQALALDQDSKGAVGKMRDAYNIFLNQLGPNDRNTKEAETWLEQLTQNAVSIAKHAKDIQARRLRRINMNPRVTTLGTKVQPQVGQTAPEASGAKGAANASMDSRSIDELLKFIEGGDATSSRSKQKKRAAASNPKLRGSKKSSA.

The region spanning 382–626 is the Clu domain; that stretch reads DITRSQESYL…RVTPLDVTWQ (245 aa). Residues 669–689 are compositionally biased toward basic and acidic residues; the sequence is KAQEEAANKEQSSEVTESKEQ. Disordered stretches follow at residues 669-700 and 939-966; these read KAQEEAANKEQSSEVTESKEQESEEKAEEALD and ANGVNGASHDEGKKKKKKGGDSKSPSRA. TPR repeat units follow at residues 1040-1073, 1082-1115, and 1124-1157; these read AKLYHQLSMLYYQTDEKEAAVELARKAVIVTERT, ILAYLNLSLFEHASGNTKAALVYIKHAMDLWKII, and ITTMNNAAVMLQHLKQYSDSRKWFEASLAVCESL. Disordered regions lie at residues 1252-1273 and 1288-1317; these read VQPQVGQTAPEASGAKGAANAS and GGDATSSRSKQKKRAAASNPKLRGSKKSSA.

This sequence belongs to the CLU family. As to quaternary structure, may associate with the eukaryotic translation initiation factor 3 (eIF-3) complex.

It localises to the cytoplasm. In terms of biological role, mRNA-binding protein involved in proper cytoplasmic distribution of mitochondria. This is Clustered mitochondria protein homolog from Neosartorya fischeri (strain ATCC 1020 / DSM 3700 / CBS 544.65 / FGSC A1164 / JCM 1740 / NRRL 181 / WB 181) (Aspergillus fischerianus).